Consider the following 938-residue polypeptide: Probable outer membrane protein pmp15 (938 aa).

The N-terminal stretch at 1 to 17 is a signal peptide; that stretch reads MRFFCFGMLLPFTFVLA. In terms of domain architecture, Autotransporter spans 659–938; sequence DEEKGHAASL…YLNVASRMRF (280 aa).

The protein belongs to the PMP outer membrane protein family.

The protein resides in the secreted. Its subcellular location is the cell wall. It is found in the cell outer membrane. This Chlamydia pneumoniae (Chlamydophila pneumoniae) protein is Probable outer membrane protein pmp15 (pmp15).